Reading from the N-terminus, the 373-residue chain is Alginate lyase (373 aa).

Positions 1-25 are cleaved as a signal peptide; it reads MRLPMQKLLIPTLLGLAMFAGSVNA. Substrate is bound by residues 66-67, 139-140, and Y257; these read SK and HT.

Belongs to the polysaccharide lyase 5 family.

The protein resides in the periplasm. It catalyses the reaction Eliminative cleavage of alginate to give oligosaccharides with 4-deoxy-alpha-L-erythro-hex-4-enuronosyl groups at their non-reducing ends and beta-D-mannuronate at their reducing end.. Catalyzes the depolymerization of alginate by cleaving the beta-1,4 glycosidic bond between two adjacent sugar residues via a beta-elimination mechanism. May serve to degrade mislocalized alginate that is trapped in the periplasmic space. The chain is Alginate lyase from Pseudomonas fluorescens.